Here is a 192-residue protein sequence, read N- to C-terminus: Pyridoxal 5'-phosphate synthase subunit PdxT (192 aa).

L-glutamine is bound at residue glycine 53–serine 55. The Nucleophile role is filled by cysteine 82. L-glutamine contacts are provided by residues arginine 109 and isoleucine 137–arginine 138. Catalysis depends on charge relay system residues histidine 173 and glutamate 175.

This sequence belongs to the glutaminase PdxT/SNO family. In terms of assembly, in the presence of PdxS, forms a dodecamer of heterodimers. Only shows activity in the heterodimer.

The catalysed reaction is aldehydo-D-ribose 5-phosphate + D-glyceraldehyde 3-phosphate + L-glutamine = pyridoxal 5'-phosphate + L-glutamate + phosphate + 3 H2O + H(+). It catalyses the reaction L-glutamine + H2O = L-glutamate + NH4(+). Its pathway is cofactor biosynthesis; pyridoxal 5'-phosphate biosynthesis. Functionally, catalyzes the hydrolysis of glutamine to glutamate and ammonia as part of the biosynthesis of pyridoxal 5'-phosphate. The resulting ammonia molecule is channeled to the active site of PdxS. The protein is Pyridoxal 5'-phosphate synthase subunit PdxT of Methanoculleus marisnigri (strain ATCC 35101 / DSM 1498 / JR1).